We begin with the raw amino-acid sequence, 298 residues long: 4-hydroxy-tetrahydrodipicolinate synthase (298 aa).

Pyruvate is bound at residue Thr-48. Tyr-137 (proton donor/acceptor) is an active-site residue. The active-site Schiff-base intermediate with substrate is the Lys-166. Residue Ile-207 coordinates pyruvate.

It belongs to the DapA family. In terms of assembly, homotetramer; dimer of dimers.

The protein resides in the cytoplasm. The enzyme catalyses L-aspartate 4-semialdehyde + pyruvate = (2S,4S)-4-hydroxy-2,3,4,5-tetrahydrodipicolinate + H2O + H(+). The protein operates within amino-acid biosynthesis; L-lysine biosynthesis via DAP pathway; (S)-tetrahydrodipicolinate from L-aspartate: step 3/4. Its function is as follows. Catalyzes the condensation of (S)-aspartate-beta-semialdehyde [(S)-ASA] and pyruvate to 4-hydroxy-tetrahydrodipicolinate (HTPA). This Campylobacter jejuni subsp. doylei (strain ATCC BAA-1458 / RM4099 / 269.97) protein is 4-hydroxy-tetrahydrodipicolinate synthase.